The following is a 246-amino-acid chain: NH(3)-dependent NAD(+) synthetase (246 aa).

29–36 (GLSGGIDS) contributes to the ATP binding site. Position 35 (Asp-35) interacts with Mg(2+). Residue Arg-110 coordinates deamido-NAD(+). Thr-130 lines the ATP pocket. Glu-135 provides a ligand contact to Mg(2+). Positions 159 and 181 each coordinate ATP.

The protein belongs to the NAD synthetase family. As to quaternary structure, homodimer.

It carries out the reaction deamido-NAD(+) + NH4(+) + ATP = AMP + diphosphate + NAD(+) + H(+). It functions in the pathway cofactor biosynthesis; NAD(+) biosynthesis; NAD(+) from deamido-NAD(+) (ammonia route): step 1/1. Functionally, catalyzes the ATP-dependent amidation of deamido-NAD to form NAD. Uses ammonia as a nitrogen source. The chain is NH(3)-dependent NAD(+) synthetase from Campylobacter jejuni subsp. jejuni serotype O:2 (strain ATCC 700819 / NCTC 11168).